The chain runs to 751 residues: Dachshund homolog 1 (751 aa).

The interval 1 to 178 is disordered; the sequence is MAVPAALIPP…PSPVENTPQN (178 aa). Composition is skewed to low complexity over residues 20–53 and 61–74; these read ISTS…SGPT and ASSA…TVTS. Gly residues-rich tracts occupy residues 75–97 and 107–119; these read PGGG…GGGS and SSGG…GGGA. Positions 120 to 156 are enriched in low complexity; the sequence is SSTPITASTGSSSSSSSSSSSSSSSSSSSSSSSSSSS. Residues 167-178 show a composition bias toward polar residues; sequence STPSPVENTPQN. A DACHbox-N region spans residues 182–268; sequence KMVDLRGAKV…LISRKDFETL (87 aa). The interaction with SIX6 and HDAC3 stretch occupies residues 182–377; the sequence is KMVDLRGAKV…VGSSGGSWDK (196 aa). Disordered regions lie at residues 273–295, 351–393, 467–525, and 537–556; these read TNAS…PENS, SNNQ…APVA, SPPS…RIPV, and MGLS…AGHD. Composition is skewed to polar residues over residues 285–294 and 351–369; these read RTQSVTSPEN and SNNQ…SSVG. A Phosphoserine modification is found at Ser484. Low complexity predominate over residues 499-517; it reads SHPSSHRSSSVSSSPARTE. The DACHbox-C stretch occupies residues 609-689; the sequence is SSIETLLTNI…KAKRKLQEAL (81 aa). An interaction with SIN3A region spans residues 620-699; sequence GLLKVAIDNA…EFETKRREQA (80 aa). The stretch at 623–711 forms a coiled coil; it reads KVAIDNARAQ…TLKQAASADS (89 aa).

The protein belongs to the DACH/dachshund family. In terms of assembly, interacts with SIX1, SIX6 and EYA3. Interacts with NCOR1 and HDAC3 through its N-terminus. Interacts with SIN3A through its C-terminus. Interacts with SMAD3 and SMAD4. As to expression, expressed at higher levels in adult kidney and lung, and at lower levels in brain and testis. Expressed in embryonal kidneys, eyes, cochleae and limb buds.

It localises to the nucleus. Functionally, transcription factor that is involved in regulation of organogenesis. Seems to be a regulator of SIX1, SIX6 and probably SIX5. Corepression of precursor cell proliferation in myoblasts by SIX1 is switched to coactivation through recruitment of EYA3 to the SIX1-DACH1 complex. Transcriptional activation also seems to involve association of CREBBP. Seems to act as a corepressor of SIX6 in regulating proliferation by directly repressing cyclin-dependent kinase inhibitors, including the p27Kip1 promoter. Inhibits TGF-beta signaling through interaction with SMAD4 and NCOR1. Binds to chromatin DNA via its DACHbox-N domain. In Mus musculus (Mouse), this protein is Dachshund homolog 1 (Dach1).